The primary structure comprises 466 residues: Probable fibrosin-1 (466 aa).

Lys8 participates in a covalent cross-link: Glycyl lysine isopeptide (Lys-Gly) (interchain with G-Cter in SUMO2). An asymmetric dimethylarginine mark is found at Arg229 and Arg239. Disordered regions lie at residues 236-315 and 410-466; these read AWVR…AAAA and LLYS…RADR. Residues 248 to 272 show a composition bias toward basic and acidic residues; it reads GSDKERPMERREPSVTKEEKDRDLP. Residue Ser281 is modified to Phosphoserine. The span at 288-311 shows a compositional bias: basic and acidic residues; it reads RAGEEGARPAKESVRVKEERKEEA. The span at 442 to 459 shows a compositional bias: pro residues; that stretch reads APPPLVPAPRPSSPPRAP.

In Mus musculus (Mouse), this protein is Probable fibrosin-1 (Fbrs).